A 121-amino-acid chain; its full sequence is Small ribosomal subunit protein uS13 (121 aa).

The disordered stretch occupies residues D94–K121. A compositionally biased stretch (basic residues) spans Q100–K121.

The protein belongs to the universal ribosomal protein uS13 family. In terms of assembly, part of the 30S ribosomal subunit. Forms a loose heterodimer with protein S19. Forms two bridges to the 50S subunit in the 70S ribosome.

In terms of biological role, located at the top of the head of the 30S subunit, it contacts several helices of the 16S rRNA. In the 70S ribosome it contacts the 23S rRNA (bridge B1a) and protein L5 of the 50S subunit (bridge B1b), connecting the 2 subunits; these bridges are implicated in subunit movement. Contacts the tRNAs in the A and P-sites. The sequence is that of Small ribosomal subunit protein uS13 from Polynucleobacter necessarius subsp. necessarius (strain STIR1).